The primary structure comprises 527 residues: L-aspartate oxidase (527 aa).

Residues 17–20, Lys40, 48–55, and Asp212 contribute to the FAD site; these read TGVA and ATHYAQGG. The active-site Proton donor/acceptor is Arg281. Residues Glu364 and 380-381 contribute to the FAD site; that span reads SL.

Belongs to the FAD-dependent oxidoreductase 2 family. NadB subfamily. FAD serves as cofactor.

It is found in the cytoplasm. The enzyme catalyses L-aspartate + O2 = iminosuccinate + H2O2. It participates in cofactor biosynthesis; NAD(+) biosynthesis; iminoaspartate from L-aspartate (oxidase route): step 1/1. Catalyzes the oxidation of L-aspartate to iminoaspartate, the first step in the de novo biosynthesis of NAD(+). This chain is L-aspartate oxidase (nadB), found in Mycobacterium tuberculosis (strain CDC 1551 / Oshkosh).